The primary structure comprises 334 residues: 4-hydroxy-3-methylbut-2-enyl diphosphate reductase (334 aa).

A [4Fe-4S] cluster-binding site is contributed by C19. (2E)-4-hydroxy-3-methylbut-2-enyl diphosphate is bound by residues H48 and H84. Dimethylallyl diphosphate-binding residues include H48 and H84. Residues H48 and H84 each coordinate isopentenyl diphosphate. [4Fe-4S] cluster is bound at residue C106. H134 contributes to the (2E)-4-hydroxy-3-methylbut-2-enyl diphosphate binding site. Position 134 (H134) interacts with dimethylallyl diphosphate. An isopentenyl diphosphate-binding site is contributed by H134. The Proton donor role is filled by E136. Position 175 (T175) interacts with (2E)-4-hydroxy-3-methylbut-2-enyl diphosphate. Residue C205 coordinates [4Fe-4S] cluster. S233, S234, N235, and S278 together coordinate (2E)-4-hydroxy-3-methylbut-2-enyl diphosphate. Positions 233, 234, 235, and 278 each coordinate dimethylallyl diphosphate. Residues S233, S234, N235, and S278 each coordinate isopentenyl diphosphate.

Belongs to the IspH family. Requires [4Fe-4S] cluster as cofactor.

The catalysed reaction is isopentenyl diphosphate + 2 oxidized [2Fe-2S]-[ferredoxin] + H2O = (2E)-4-hydroxy-3-methylbut-2-enyl diphosphate + 2 reduced [2Fe-2S]-[ferredoxin] + 2 H(+). It carries out the reaction dimethylallyl diphosphate + 2 oxidized [2Fe-2S]-[ferredoxin] + H2O = (2E)-4-hydroxy-3-methylbut-2-enyl diphosphate + 2 reduced [2Fe-2S]-[ferredoxin] + 2 H(+). It functions in the pathway isoprenoid biosynthesis; dimethylallyl diphosphate biosynthesis; dimethylallyl diphosphate from (2E)-4-hydroxy-3-methylbutenyl diphosphate: step 1/1. Its pathway is isoprenoid biosynthesis; isopentenyl diphosphate biosynthesis via DXP pathway; isopentenyl diphosphate from 1-deoxy-D-xylulose 5-phosphate: step 6/6. Functionally, catalyzes the conversion of 1-hydroxy-2-methyl-2-(E)-butenyl 4-diphosphate (HMBPP) into a mixture of isopentenyl diphosphate (IPP) and dimethylallyl diphosphate (DMAPP). Acts in the terminal step of the DOXP/MEP pathway for isoprenoid precursor biosynthesis. This Chelativorans sp. (strain BNC1) protein is 4-hydroxy-3-methylbut-2-enyl diphosphate reductase.